A 120-amino-acid polypeptide reads, in one-letter code: Large ribosomal subunit protein uL18 (120 aa).

Belongs to the universal ribosomal protein uL18 family. In terms of assembly, part of the 50S ribosomal subunit; part of the 5S rRNA/L5/L18/L25 subcomplex. Contacts the 5S and 23S rRNAs.

Its function is as follows. This is one of the proteins that bind and probably mediate the attachment of the 5S RNA into the large ribosomal subunit, where it forms part of the central protuberance. This Staphylococcus saprophyticus subsp. saprophyticus (strain ATCC 15305 / DSM 20229 / NCIMB 8711 / NCTC 7292 / S-41) protein is Large ribosomal subunit protein uL18.